The primary structure comprises 230 residues: 2-C-methyl-D-erythritol 4-phosphate cytidylyltransferase (230 aa).

It belongs to the IspD/TarI cytidylyltransferase family. IspD subfamily.

The enzyme catalyses 2-C-methyl-D-erythritol 4-phosphate + CTP + H(+) = 4-CDP-2-C-methyl-D-erythritol + diphosphate. Its pathway is isoprenoid biosynthesis; isopentenyl diphosphate biosynthesis via DXP pathway; isopentenyl diphosphate from 1-deoxy-D-xylulose 5-phosphate: step 2/6. Functionally, catalyzes the formation of 4-diphosphocytidyl-2-C-methyl-D-erythritol from CTP and 2-C-methyl-D-erythritol 4-phosphate (MEP). The polypeptide is 2-C-methyl-D-erythritol 4-phosphate cytidylyltransferase (Shewanella halifaxensis (strain HAW-EB4)).